Here is a 201-residue protein sequence, read N- to C-terminus: 3-isopropylmalate dehydratase small subunit (201 aa).

This sequence belongs to the LeuD family. LeuD type 1 subfamily. Heterodimer of LeuC and LeuD.

The enzyme catalyses (2R,3S)-3-isopropylmalate = (2S)-2-isopropylmalate. The protein operates within amino-acid biosynthesis; L-leucine biosynthesis; L-leucine from 3-methyl-2-oxobutanoate: step 2/4. Catalyzes the isomerization between 2-isopropylmalate and 3-isopropylmalate, via the formation of 2-isopropylmaleate. The protein is 3-isopropylmalate dehydratase small subunit of Cereibacter sphaeroides (strain KD131 / KCTC 12085) (Rhodobacter sphaeroides).